A 427-amino-acid chain; its full sequence is Queuine tRNA-ribosyltransferase catalytic subunit (427 aa).

Residue aspartate 99 is the Proton acceptor of the active site. Residues 99-103, aspartate 153, glutamine 196, and glycine 223 each bind substrate; that span reads DSGGF. The tract at residues 254–260 is RNA binding; that stretch reads GVGFAAD. Aspartate 273 acts as the Nucleophile in catalysis. Positions 278-282 are RNA binding; important for wobble base 34 recognition; sequence TRTAR. Residues cysteine 311, cysteine 313, cysteine 316, and histidine 341 each coordinate Zn(2+). The disordered stretch occupies residues 395 to 427; the sequence is PADPERIDEQDQKPKTEKRRETEDVAEEQVASS. Basic and acidic residues predominate over residues 397 to 417; the sequence is DPERIDEQDQKPKTEKRRETE.

The protein belongs to the queuine tRNA-ribosyltransferase family. As to quaternary structure, heterodimer of a catalytic subunit and an accessory subunit. Zn(2+) is required as a cofactor.

The protein localises to the cytoplasm. The catalysed reaction is guanosine(34) in tRNA + queuine = queuosine(34) in tRNA + guanine. Catalytic subunit of the queuine tRNA-ribosyltransferase (TGT) that catalyzes the base-exchange of a guanine (G) residue with queuine (Q) at position 34 (anticodon wobble position) in tRNAs with GU(N) anticodons (tRNA-Asp, -Asn, -His and -Tyr), resulting in the hypermodified nucleoside queuosine (7-(((4,5-cis-dihydroxy-2-cyclopenten-1-yl)amino)methyl)-7-deazaguanosine). Catalysis occurs through a double-displacement mechanism. The nucleophile active site attacks the C1' of nucleotide 34 to detach the guanine base from the RNA, forming a covalent enzyme-RNA intermediate. The proton acceptor active site deprotonates the incoming queuine, allowing a nucleophilic attack on the C1' of the ribose to form the product. The polypeptide is Queuine tRNA-ribosyltransferase catalytic subunit (Tgt) (Drosophila melanogaster (Fruit fly)).